A 522-amino-acid polypeptide reads, in one-letter code: UPF0288 protein MTH_1865 (522 aa).

Belongs to the UPF0288 family.

In Methanothermobacter thermautotrophicus (strain ATCC 29096 / DSM 1053 / JCM 10044 / NBRC 100330 / Delta H) (Methanobacterium thermoautotrophicum), this protein is UPF0288 protein MTH_1865.